The chain runs to 168 residues: Lipid transfer protein EARLI 1 (168 aa).

The N-terminal stretch at 1–25 (MASKNSASIALFFALNIIFFTLTAA) is a signal peptide. The interval 32 to 81 (PSPKHKPVPSPKPKPVPSPKPKPVPSPSVPSPSVPSPNPRPVTPPRTPGS) is disordered. One copy of the A-1 repeat lies at 34–41 (PKHKPVPS). Positions 34–57 (PKHKPVPSPKPKPVPSPKPKPVPS) are 3 X 8 AA repeats A of P-K-[HP]-K-P-V-P-S. Residues 39 to 78 (VPSPKPKPVPSPKPKPVPSPSVPSPSVPSPNPRPVTPPRT) show a composition bias toward pro residues. Residues 42–49 (PKPKPVPS) form an A-2 repeat. The A-3 repeat unit spans residues 50 to 57 (PKPKPVPS). Residues 58–62 (PSVPS) form a B-1 repeat. Residues 58-67 (PSVPSPSVPS) are 2 X 58 AA tandem repeats B of P-S-V-P-S. One copy of the B-2 repeat lies at 63–67 (PSVPS).

The protein belongs to the plant LTP family. PEARLI1 subfamily. As to expression, mostly expressed in aerial part of seedlings, and, to a lower extent, in roots. Higher basal levels in early-flowering ecotypes.

The protein localises to the secreted. It localises to the cell wall. Its function is as follows. Probable lipid transfer protein (LTP). May improve freezing survival. Seems to control the flowering process and lignin synthesis. Has an auxiliary role for germinability and early seedling development under low temperature and salt stress conditions, probably in an abscisic acid- (ABA) dependent manner. Confers resistance to Botrytis cinerea and exhibits anti-fungal activity, at least against S.cerevisiae, B.cinerea and Fusarium oxysporum, probably by increasing their membrane permeability. This Arabidopsis thaliana (Mouse-ear cress) protein is Lipid transfer protein EARLI 1 (EARLI1).